The sequence spans 436 residues: 3-ketoacyl-CoA thiolase (436 aa).

Residue cysteine 99 is the Acyl-thioester intermediate of the active site. Catalysis depends on proton acceptor residues histidine 392 and cysteine 422.

The protein belongs to the thiolase-like superfamily. Thiolase family. As to quaternary structure, heterotetramer of two alpha chains (FadJ) and two beta chains (FadI).

It is found in the cytoplasm. The enzyme catalyses an acyl-CoA + acetyl-CoA = a 3-oxoacyl-CoA + CoA. It functions in the pathway lipid metabolism; fatty acid beta-oxidation. In terms of biological role, catalyzes the final step of fatty acid oxidation in which acetyl-CoA is released and the CoA ester of a fatty acid two carbons shorter is formed. This is 3-ketoacyl-CoA thiolase from Shewanella sp. (strain ANA-3).